The chain runs to 528 residues: GTPase Obg (528 aa).

Residues 2–159 (ASFVDRVVLH…SDIVLELKSI (158 aa)) form the Obg domain. Residues 160-343 (ADIALVGFPS…LGFAMAEIVQ (184 aa)) form the OBG-type G domain. GTP-binding positions include 166-173 (GFPSAGKS), 191-195 (FTTLI), 212-215 (DVPG), 295-298 (NKVD), and 324-326 (SAT). Mg(2+) is bound by residues S173 and T193. In terms of domain architecture, OCT spans 363–447 (PRAVNESGFK…DDGVVFDWEP (85 aa)). The tract at residues 471–490 (DRPTRSQKRDEQIERREAKA) is disordered.

Belongs to the TRAFAC class OBG-HflX-like GTPase superfamily. OBG GTPase family. In terms of assembly, monomer. The cofactor is Mg(2+).

The protein resides in the cytoplasm. Functionally, an essential GTPase which binds GTP, GDP and possibly (p)ppGpp with moderate affinity, with high nucleotide exchange rates and a fairly low GTP hydrolysis rate. Plays a role in control of the cell cycle, stress response, ribosome biogenesis and in those bacteria that undergo differentiation, in morphogenesis control. The protein is GTPase Obg of Paenarthrobacter aurescens (strain TC1).